A 435-amino-acid chain; its full sequence is Tryptophan synthase beta chain (435 aa).

At Lys-92 the chain carries N6-(pyridoxal phosphate)lysine.

Belongs to the TrpB family. In terms of assembly, tetramer of two alpha and two beta chains. Pyridoxal 5'-phosphate is required as a cofactor.

It carries out the reaction (1S,2R)-1-C-(indol-3-yl)glycerol 3-phosphate + L-serine = D-glyceraldehyde 3-phosphate + L-tryptophan + H2O. It participates in amino-acid biosynthesis; L-tryptophan biosynthesis; L-tryptophan from chorismate: step 5/5. Functionally, the beta subunit is responsible for the synthesis of L-tryptophan from indole and L-serine. The protein is Tryptophan synthase beta chain of Albidiferax ferrireducens (strain ATCC BAA-621 / DSM 15236 / T118) (Rhodoferax ferrireducens).